We begin with the raw amino-acid sequence, 200 residues long: Insulin, isoform 2 (200 aa).

The interval 148 to 200 (EVDSSPQPQGSESLPAQPPAQPAPQPEPQQAREPSPEVSCCGLWPRRPQRSQN) is disordered. Positions 163 to 174 (AQPPAQPAPQPE) are enriched in pro residues. Over residues 175 to 184 (PQQAREPSPE) the composition is skewed to low complexity.

As to expression, expressed in pancreas, eye and, to a lower extent, in limb.

The sequence is that of Insulin, isoform 2 (INS-IGF2) from Homo sapiens (Human).